We begin with the raw amino-acid sequence, 351 residues long: Nicotinate-nucleotide--dimethylbenzimidazole phosphoribosyltransferase (351 aa).

The active-site Proton acceptor is glutamate 317.

This sequence belongs to the CobT family.

It carries out the reaction 5,6-dimethylbenzimidazole + nicotinate beta-D-ribonucleotide = alpha-ribazole 5'-phosphate + nicotinate + H(+). The protein operates within nucleoside biosynthesis; alpha-ribazole biosynthesis; alpha-ribazole from 5,6-dimethylbenzimidazole: step 1/2. Catalyzes the synthesis of alpha-ribazole-5'-phosphate from nicotinate mononucleotide (NAMN) and 5,6-dimethylbenzimidazole (DMB). This is Nicotinate-nucleotide--dimethylbenzimidazole phosphoribosyltransferase from Pseudomonas putida (strain GB-1).